Consider the following 461-residue polypeptide: Porin AaxA (461 aa).

An N-terminal signal peptide occupies residues 1–22 (MSFRSVLLTALLSLSFTTTMQA).

This sequence belongs to the OprB family.

It localises to the cell outer membrane. Facilitates L-arginine uptake, as part of the AaxABC system. The arginine uptake by the bacterium in the macrophage may be a virulence factor against the host innate immune response. The protein is Porin AaxA (aaxA) of Chlamydia trachomatis serovar L2 (strain ATCC VR-902B / DSM 19102 / 434/Bu).